A 155-amino-acid chain; its full sequence is MSKRNQVSYVRPAEPAFLSRFKERVGYREGPTVETKKIQPQLPDEDGNESDKEDEQPQVVVLKKGDLTAEEVMKIKAEIKAAKADEEPPPADGRIMYRKPVKRSSDEKCSGLTASSKKKKTNEDDVNKQSPVRKNSQKQIKNSSLLSFGSEDENE.

2 disordered regions span residues 24–63 (RVGYREGPTVETKKIQPQLPDEDGNESDKEDEQPQVVVLK) and 80–155 (KAAK…DENE). Acidic residues predominate over residues 43 to 56 (PDEDGNESDKEDEQ). At Ser-50 the chain carries Phosphoserine. Residue Lys-108 is modified to N6-acetyllysine. A compositionally biased stretch (polar residues) spans 128–147 (KQSPVRKNSQKQIKNSSLLS). 3 positions are modified to phosphoserine: Ser-130, Ser-147, and Ser-150.

This is an uncharacterized protein from Rattus norvegicus (Rat).